Here is a 40-residue protein sequence, read N- to C-terminus: Submaxillary gland androgen-regulated protein 2, isoform epsilon (40 aa).

Positions 1–20 (MKALYMVFVLWVLIGCFLRC) are cleaved as a signal peptide.

The protein resides in the secreted. In terms of biological role, may play a role in protection or detoxification. In Mus musculus (Mouse), this protein is Submaxillary gland androgen-regulated protein 2, isoform epsilon (Smr2).